Reading from the N-terminus, the 830-residue chain is Prolactin receptor (830 aa).

The signal sequence occupies residues 1–23; sequence MKQKLRSSVQIILLFALTAVGLT. Over 24–439 the chain is Extracellular; sequence GQSYPGKPKI…QIPTDFRIKD (416 aa). 4 consecutive Fibronectin type-III domains span residues 30-128, 129-228, 231-331, and 333-434; these read KPKI…VQPD, APVN…IPNG, PPEK…IVQT, and PPVN…IPTD. Cys36 and Cys46 are disulfide-bonded. N-linked (GlcNAc...) asparagine glycosylation is present at Asn59. A disulfide bridge links Cys75 with Cys86. N-linked (GlcNAc...) asparagine glycans are attached at residues Asn91, Asn100, Asn112, Asn132, Asn263, Asn304, Asn316, and Asn336. Positions 415 and 417 each coordinate Zn(2+). Residues 420–424 carry the WSXWS motif motif; it reads WSEWS. A helical transmembrane segment spans residues 440-460; it reads MVVWIIVGVLSSLICLVMSWT. The Cytoplasmic segment spans residues 461 to 830; it reads MVLKGYRMIA…DPSSFIPAFK (370 aa). A Box 1 motif motif is present at residues 472-480; that stretch reads ILPPVPGPK.

The protein belongs to the type I cytokine receptor family. Type 1 subfamily.

It localises to the membrane. Functionally, this is a receptor for the anterior pituitary hormone prolactin. This chain is Prolactin receptor (PRLR), found in Columba livia (Rock dove).